Consider the following 414-residue polypeptide: F-box protein At3g26010 (414 aa).

In terms of domain architecture, F-box spans 5–52 (NRTIHLTDAIWTEILARLPLRIIARFKSVSKTWKSTIESVYFRRLFVS).

In Arabidopsis thaliana (Mouse-ear cress), this protein is F-box protein At3g26010.